The sequence spans 802 residues: Transcriptional activator FLO8 (802 aa).

2 stretches are compositionally biased toward polar residues: residues 1-10 and 28-40; these read MSYKVNSSYP and DLQS…TNSE. 7 disordered regions span residues 1 to 20, 28 to 71, 104 to 130, 258 to 409, 434 to 506, 566 to 625, and 647 to 757; these read MSYK…EQPY, DLQS…SDLK, AHLD…QNTF, TTGA…RVNK, NSKS…SVIL, SCFD…PHGF, and VSQE…QTST. Residues 41–58 are compositionally biased toward low complexity; sequence QQRQQQQQQQQQQQQQQQ. Residues 76–108 form the LisH domain; sequence CKNTLNEYIFDFLTKSSLKNTAAAFAQDAHLDR. Residues 273–288 are compositionally biased toward polar residues; sequence DFTNVGPTQNRSQNVT. A compositionally biased stretch (low complexity) spans 310 to 320; that stretch reads NNNTTNNTTNN. Polar residues predominate over residues 321 to 343; sequence KSPVNQPKSLKTMHSTDKPNNVP. Over residues 344 to 356 the composition is skewed to low complexity; the sequence is TSKSTRSRSATSK. Residues 357 to 373 show a composition bias toward basic residues; sequence AKGKVKAGLVAKRRRKN. The span at 374-399 shows a compositional bias: polar residues; the sequence is NTATVSAGSTNAGSPNITTPGSTTSE. Residues 485 to 500 show a composition bias toward basic residues; that stretch reads GKKRSPPNTRVSRRKS. Polar residues-rich tracts occupy residues 587–596, 663–678, and 698–757; these read SKVSASSPLS, GNDS…TLST, and NPSS…QTST.

This sequence belongs to the FLO8 family.

Its subcellular location is the nucleus. In terms of biological role, required for diploid filamentous growth, haploid invasive growth and flocculation. Putative transcriptional activator of FLO1. This Saccharomyces cerevisiae (strain JAY291) (Baker's yeast) protein is Transcriptional activator FLO8 (FLO8).